A 237-amino-acid polypeptide reads, in one-letter code: Cuticlin-like protein 19 (237 aa).

Residues 1 to 20 (MVEYNRIFCVLVIFSTTIKC) form the signal peptide.

As to quaternary structure, interacts with vps-51 and vps-52. As to expression, expression detected in motor neurons.

It localises to the golgi apparatus. The protein localises to the trans-Golgi network. The sequence is that of Cuticlin-like protein 19 (cutl-19) from Caenorhabditis elegans.